We begin with the raw amino-acid sequence, 130 residues long: Protein ApaG (130 aa).

An ApaG domain is found at 3–127; sequence RALTRDIEVT…FSLDSPGLVR (125 aa).

The chain is Protein ApaG from Rhizobium meliloti (strain 1021) (Ensifer meliloti).